The chain runs to 197 residues: MQRWKAAALASVLCSSVLSIWMCREGLLLSHRLGPALVPLHRLPRTLDARIARLAQYRALLQGAPDAMELRELTPWAGRPPGPRRRAGPRRRRARARLGARPCGLRELEVRVSELGLGYASDETVLFRYCAGACEAAARVYDLGLRRLRQRRRLRRERVRAQPCCRPTAYEDEVSFLDAHSRYHTVHELSARECACV.

An N-terminal signal peptide occupies residues 1 to 19 (MQRWKAAALASVLCSSVLS). Residues 20-95 (IWMCREGLLL…RAGPRRRRAR (76 aa)) constitute a propeptide that is removed on maturation. The interval 74 to 93 (TPWAGRPPGPRRRAGPRRRR) is disordered. Positions 82–93 (GPRRRAGPRRRR) are enriched in basic residues. 3 disulfide bridges follow: Cys103–Cys165, Cys130–Cys194, and Cys134–Cys196. Heparan sulfate group-binding residues include Arg149, Arg158, Arg160, and Gln162.

This sequence belongs to the TGF-beta family. GDNF subfamily. Homodimer; disulfide-linked. Interacts with GFRA2 coreceptor and RET: forms a 2:2:2 ternary complex composed of NRTN ligand, GFRA2 and RET receptor. Also forms a 4:4:4 tetrameric complex composed of 4 copies of NRTN ligand, GFRA2 and RET receptor, which prevents endocytosis of RET.

The protein localises to the secreted. Functionally, growth factor that supports the survival of sympathetic neurons in culture. May regulate the development and maintenance of the CNS. Involved in the development of the neural crest. Might control the size of non-neuronal cell population such as haemopoietic cells. Acts by binding to its coreceptor, GFRA2, leading to autophosphorylation and activation of the RET receptor. Heparan sulfate-binding is required for signaling. The polypeptide is Neurturin (Homo sapiens (Human)).